The primary structure comprises 233 residues: Large ribosomal subunit protein uL1 (233 aa).

Belongs to the universal ribosomal protein uL1 family. As to quaternary structure, part of the 50S ribosomal subunit.

Binds directly to 23S rRNA. The L1 stalk is quite mobile in the ribosome, and is involved in E site tRNA release. Functionally, protein L1 is also a translational repressor protein, it controls the translation of the L11 operon by binding to its mRNA. The chain is Large ribosomal subunit protein uL1 from Shewanella oneidensis (strain ATCC 700550 / JCM 31522 / CIP 106686 / LMG 19005 / NCIMB 14063 / MR-1).